The primary structure comprises 482 residues: tRNA modification GTPase MnmE (482 aa).

Arg-25, Glu-82, and Lys-135 together coordinate (6S)-5-formyl-5,6,7,8-tetrahydrofolate. One can recognise a TrmE-type G domain in the interval Gly-231–Gly-404. Residue Asn-241 participates in K(+) binding. Residues Asn-241 to Ser-246, Thr-260 to Thr-266, Asp-285 to Gly-288, and Ser-385 to Arg-387 contribute to the GTP site. Ser-245 lines the Mg(2+) pocket. Thr-260, Ile-262, and Thr-265 together coordinate K(+). Mg(2+) is bound at residue Thr-266. Lys-482 is a (6S)-5-formyl-5,6,7,8-tetrahydrofolate binding site.

This sequence belongs to the TRAFAC class TrmE-Era-EngA-EngB-Septin-like GTPase superfamily. TrmE GTPase family. Homodimer. Heterotetramer of two MnmE and two MnmG subunits. Requires K(+) as cofactor.

Its subcellular location is the cytoplasm. Functionally, exhibits a very high intrinsic GTPase hydrolysis rate. Involved in the addition of a carboxymethylaminomethyl (cmnm) group at the wobble position (U34) of certain tRNAs, forming tRNA-cmnm(5)s(2)U34. In Paracidovorax citrulli (strain AAC00-1) (Acidovorax citrulli), this protein is tRNA modification GTPase MnmE.